The sequence spans 558 residues: Cytochrome c oxidase subunit 1-beta (558 aa).

Over 1–28 the chain is Cytoplasmic; it reads MADAAVHGHGDHHDTRGFFTRWFMSTNH. The helical transmembrane segment at 29–59 threads the bilayer; the sequence is KDIGILYLFTAGIVGLISVCFTVYMRMELQH. The Periplasmic portion of the chain corresponds to 60 to 82; it reads PGVQYMCLEGARLIADASAECTP. C66 and C80 are oxidised to a cystine. The chain crosses the membrane as a helical span at residues 83 to 120; it reads NGHLWNVMITYHGVLMMFFVVIPALFGGFGNYFMPLHI. H94 is a Fe(II)-heme a binding site. At 121–126 the chain is on the cytoplasmic side; it reads GAPDMA. The chain crosses the membrane as a helical span at residues 127–151; the sequence is FPRLNNLSYWMYVCGVALGVASLLA. The Periplasmic segment spans residues 152–176; the sequence is PGGNDQMGSGVGWVLYPPLSTTEAG. Residues 177 to 206 form a helical membrane-spanning segment; sequence YSMDLAIFAVHVSGASSILGAINIITTFLN. At 207 to 217 the chain is on the cytoplasmic side; it reads MRAPGMTLFKV. The chain crosses the membrane as a helical span at residues 218–251; the sequence is PLFAWSVFITAWLILLSLPVLAGAITMLLMDRNF. At 252–262 the chain is on the periplasmic side; it reads GTQFFDPAGGG. Residues 263–299 form a helical membrane-spanning segment; the sequence is DPVLYQHILWFFGHPEVYIIILPGFGIISHVISTFAK. Positions 276 and 280 each coordinate Cu cation. Residues 276-280 constitute a cross-link (1'-histidyl-3'-tyrosine (His-Tyr)); that stretch reads HPEVY. The Cytoplasmic portion of the chain corresponds to 300-303; sequence KPIF. Residues 304–331 traverse the membrane as a helical segment; it reads GYLPMVLAMAAIGILGFVVWAHHMYTAG. Residues H325 and H326 each contribute to the Cu cation site. Residue M332 is a topological domain, periplasmic. Residues 333-364 traverse the membrane as a helical segment; that stretch reads SLTQQAYFMLATMTIAVPTGIKVFSWIATMWG. Residues 365 to 369 are Cytoplasmic-facing; sequence GSIEF. The chain crosses the membrane as a helical span at residues 370–395; sequence KTPMLWAFGFLFLFTVGGVTGVVLSQ. Topologically, residues 396–404 are periplasmic; it reads APLDRVYHD. A helical transmembrane segment spans residues 405 to 437; that stretch reads TYYVVAHFHYVMSLGAVFGIFAGVYYWIGKMSG. H411 serves as a coordination point for heme a3. Residue H413 coordinates Fe(II)-heme a. Over 438–440 the chain is Cytoplasmic; that stretch reads RQY. The helical transmembrane segment at 441-469 threads the bilayer; it reads PEWAGQLHFWMMFIGSNLIFFPQHFLGRQ. Residues 470-478 lie on the Periplasmic side of the membrane; that stretch reads GMPRRYIDY. A helical transmembrane segment spans residues 479-514; sequence PVEFAYWNNISSIGAYISFASFLFFIGIVFYTLFAG. Residues 515–558 lie on the Cytoplasmic side of the membrane; it reads KRVNVPNYWNEHADTLEWTLPSPPPEHTFETLPKREDWDRAHAH.

It belongs to the heme-copper respiratory oxidase family. Cu(2+) is required as a cofactor. It depends on heme as a cofactor. In terms of processing, his-276 and Tyr-280 are involved in the formation of a copper-coordinated covalent cross-link at the active site of the catalytic subunit I.

It is found in the cell inner membrane. The enzyme catalyses 4 Fe(II)-[cytochrome c] + O2 + 8 H(+)(in) = 4 Fe(III)-[cytochrome c] + 2 H2O + 4 H(+)(out). It participates in energy metabolism; oxidative phosphorylation. Functionally, subunit I and II form the functional core of the enzyme complex. Electrons originating in cytochrome c are transferred via heme a and Cu(A) to the binuclear center formed by heme a3 and Cu(B). This cytochrome c oxidase shows proton pump activity across the membrane in addition to the electron transfer. The polypeptide is Cytochrome c oxidase subunit 1-beta (ctaDII) (Paracoccus denitrificans).